A 178-amino-acid polypeptide reads, in one-letter code: Crossover junction endodeoxyribonuclease RuvC (178 aa).

Residues Asp8, Glu72, and Asp144 contribute to the active site. Asp8, Glu72, and Asp144 together coordinate Mg(2+).

It belongs to the RuvC family. In terms of assembly, homodimer which binds Holliday junction (HJ) DNA. The HJ becomes 2-fold symmetrical on binding to RuvC with unstacked arms; it has a different conformation from HJ DNA in complex with RuvA. In the full resolvosome a probable DNA-RuvA(4)-RuvB(12)-RuvC(2) complex forms which resolves the HJ. It depends on Mg(2+) as a cofactor.

It is found in the cytoplasm. The catalysed reaction is Endonucleolytic cleavage at a junction such as a reciprocal single-stranded crossover between two homologous DNA duplexes (Holliday junction).. In terms of biological role, the RuvA-RuvB-RuvC complex processes Holliday junction (HJ) DNA during genetic recombination and DNA repair. Endonuclease that resolves HJ intermediates. Cleaves cruciform DNA by making single-stranded nicks across the HJ at symmetrical positions within the homologous arms, yielding a 5'-phosphate and a 3'-hydroxyl group; requires a central core of homology in the junction. The consensus cleavage sequence is 5'-(A/T)TT(C/G)-3'. Cleavage occurs on the 3'-side of the TT dinucleotide at the point of strand exchange. HJ branch migration catalyzed by RuvA-RuvB allows RuvC to scan DNA until it finds its consensus sequence, where it cleaves and resolves the cruciform DNA. The sequence is that of Crossover junction endodeoxyribonuclease RuvC from Idiomarina loihiensis (strain ATCC BAA-735 / DSM 15497 / L2-TR).